The sequence spans 906 residues: Protein transport protein SEC24-2 (906 aa).

4 residues coordinate Zn(2+): cysteine 222, cysteine 225, cysteine 244, and cysteine 247. Residues 222–247 (CRRCRSYMNPFVTFIEQGRRWRCNFC) form a zinc finger-like region.

Belongs to the SEC23/SEC24 family. SEC24 subfamily. As to quaternary structure, the COPII coat is composed of at least 5 proteins: the SEC23/24 complex, the SEC13/31 complex, and the protein SAR1. Golgi apparatus membrane; Peripheral membrane protein; Cytoplasmic side.

It localises to the cytoplasm. Its subcellular location is the cytoplasmic vesicle. It is found in the COPII-coated vesicle membrane. The protein resides in the endoplasmic reticulum membrane. The protein localises to the golgi apparatus membrane. In terms of biological role, component of the coat protein complex II (COPII) which promotes the formation of transport vesicles from the endoplasmic reticulum (ER). The coat has two main functions, the physical deformation of the endoplasmic reticulum membrane into vesicles and the selection of cargo molecules. The polypeptide is Protein transport protein SEC24-2 (SEC242) (Candida glabrata (strain ATCC 2001 / BCRC 20586 / JCM 3761 / NBRC 0622 / NRRL Y-65 / CBS 138) (Yeast)).